Reading from the N-terminus, the 424-residue chain is DNA primase DnaG (424 aa).

In terms of domain architecture, Toprim spans 171–245 (DDIIVVEGRA…DVDFVARAPP (75 aa)). Mg(2+) contacts are provided by Glu177, Asp219, and Asp221.

This sequence belongs to the archaeal DnaG primase family. Forms a ternary complex with MCM helicase and DNA. Mg(2+) is required as a cofactor.

It catalyses the reaction ssDNA + n NTP = ssDNA/pppN(pN)n-1 hybrid + (n-1) diphosphate.. RNA polymerase that catalyzes the synthesis of short RNA molecules used as primers for DNA polymerase during DNA replication. This chain is DNA primase DnaG, found in Methanocaldococcus jannaschii (strain ATCC 43067 / DSM 2661 / JAL-1 / JCM 10045 / NBRC 100440) (Methanococcus jannaschii).